The sequence spans 227 residues: Large ribosomal subunit protein uL3 (227 aa).

Gln151 carries the N5-methylglutamine modification.

This sequence belongs to the universal ribosomal protein uL3 family. In terms of assembly, part of the 50S ribosomal subunit. Forms a cluster with proteins L14 and L19. In terms of processing, methylated by PrmB.

Functionally, one of the primary rRNA binding proteins, it binds directly near the 3'-end of the 23S rRNA, where it nucleates assembly of the 50S subunit. This chain is Large ribosomal subunit protein uL3, found in Gluconobacter oxydans (strain 621H) (Gluconobacter suboxydans).